The chain runs to 379 residues: Cytochrome b (379 aa).

4 helical membrane-spanning segments follow: residues 33-53, 77-98, 113-133, and 178-198; these read FGSL…FLAM, WFLR…YLHI, WNVG…GYVL, and FFTF…IHLL. Residues histidine 83 and histidine 97 each coordinate heme b. Histidine 182 and histidine 196 together coordinate heme b. Histidine 201 contributes to the a ubiquinone binding site. Transmembrane regions (helical) follow at residues 226 to 246, 288 to 308, 320 to 340, and 347 to 367; these read YKDL…TLFS, LGGV…PITH, LTQI…WIGG, and FIII…VFAP.

It belongs to the cytochrome b family. The cytochrome bc1 complex contains 3 respiratory subunits (MT-CYB, CYC1 and UQCRFS1), 2 core proteins (UQCRC1 and UQCRC2) and probably 6 low-molecular weight proteins. Heme b is required as a cofactor.

The protein resides in the mitochondrion inner membrane. Its function is as follows. Component of the ubiquinol-cytochrome c reductase complex (complex III or cytochrome b-c1 complex) that is part of the mitochondrial respiratory chain. The b-c1 complex mediates electron transfer from ubiquinol to cytochrome c. Contributes to the generation of a proton gradient across the mitochondrial membrane that is then used for ATP synthesis. The sequence is that of Cytochrome b (mt-cyb) from Amia calva (Bowfin).